The sequence spans 409 residues: 4-hydroxy-3-methylbut-2-en-1-yl diphosphate synthase (ferredoxin) (409 aa).

The span at 1 to 12 shows a compositional bias: polar residues; the sequence is MQTLDRPNAPTQ. The disordered stretch occupies residues 1–22; sequence MQTLDRPNAPTQQPYPEPVYPR. Residues Cys314, Cys317, Cys348, and Glu355 each coordinate [4Fe-4S] cluster.

It belongs to the IspG family. [4Fe-4S] cluster is required as a cofactor.

It carries out the reaction (2E)-4-hydroxy-3-methylbut-2-enyl diphosphate + 2 oxidized [2Fe-2S]-[ferredoxin] + H2O = 2-C-methyl-D-erythritol 2,4-cyclic diphosphate + 2 reduced [2Fe-2S]-[ferredoxin] + H(+). It functions in the pathway isoprenoid biosynthesis; isopentenyl diphosphate biosynthesis via DXP pathway; isopentenyl diphosphate from 1-deoxy-D-xylulose 5-phosphate: step 5/6. In terms of biological role, converts 2C-methyl-D-erythritol 2,4-cyclodiphosphate (ME-2,4cPP) into 1-hydroxy-2-methyl-2-(E)-butenyl 4-diphosphate. The sequence is that of 4-hydroxy-3-methylbut-2-en-1-yl diphosphate synthase (ferredoxin) from Synechococcus sp. (strain JA-2-3B'a(2-13)) (Cyanobacteria bacterium Yellowstone B-Prime).